The chain runs to 344 residues: Protein PopA1 (344 aa).

5 disordered regions span residues 1 to 28 (MSVGNIQSPSNLPGLQNLNLNTNTNSQQ), 58 to 108 (SAGG…DANN), 134 to 156 (QPGGNDKGNGVGGANGAKGAGGQ), 211 to 242 (GNGVNGNQANGPQNAGDVNGANGADDGSEDQG), and 268 to 311 (GGGN…NLQS). Composition is skewed to low complexity over residues 8–28 (SPSNLPGLQNLNLNTNTNSQQ) and 65–83 (NTGNAPAKDGNANAGANDP). Polar residues predominate over residues 89–108 (SKSQGPQSANKTGNVDDANN). Residues 138-156 (NDKGNGVGGANGAKGAGGQ) show a composition bias toward gly residues. A compositionally biased stretch (low complexity) spans 215–235 (NGNQANGPQNAGDVNGANGAD). Gly residues predominate over residues 268–279 (GGGNQAQGGSKG). A compositionally biased stretch (low complexity) spans 280–294 (AGNASPASGANPGAN). Residues 295 to 311 (QPGSADDQSSGQNNLQS) show a composition bias toward polar residues.

PopA2 and PopA3 are produced from PopA1.

The protein resides in the secreted. Acts as a specific hypersensitive response (HR) elicitor. Has activity on tobacco (non-host plant) and petunia but is without activity on tomato (host plant); PopA3 seems to be more active than a PopA1-PopA2 mixture. The chain is Protein PopA1 (popA) from Ralstonia nicotianae (strain ATCC BAA-1114 / GMI1000) (Ralstonia solanacearum).